A 362-amino-acid polypeptide reads, in one-letter code: D-alanine--D-alanine ligase (362 aa).

The region spanning 141–346 is the ATP-grasp domain; sequence KNIFAEAGLN…YPELIEELIR (206 aa). 174 to 229 is a binding site for ATP; sequence EEALGYPCFVKPANLGSSVGINKCKDREELEKAFEEAFQFDRKIIVEENIIGREVE. Residues D300, E313, and N315 each coordinate Mg(2+).

The protein belongs to the D-alanine--D-alanine ligase family. Mg(2+) serves as cofactor. The cofactor is Mn(2+).

It localises to the cytoplasm. It catalyses the reaction 2 D-alanine + ATP = D-alanyl-D-alanine + ADP + phosphate + H(+). It participates in cell wall biogenesis; peptidoglycan biosynthesis. Its function is as follows. Cell wall formation. The chain is D-alanine--D-alanine ligase from Bacillus cytotoxicus (strain DSM 22905 / CIP 110041 / 391-98 / NVH 391-98).